The primary structure comprises 156 residues: Small ribosomal subunit protein uS7 (156 aa).

It belongs to the universal ribosomal protein uS7 family. In terms of assembly, part of the 30S ribosomal subunit. Contacts proteins S9 and S11.

Functionally, one of the primary rRNA binding proteins, it binds directly to 16S rRNA where it nucleates assembly of the head domain of the 30S subunit. Is located at the subunit interface close to the decoding center, probably blocks exit of the E-site tRNA. This is Small ribosomal subunit protein uS7 from Levilactobacillus brevis (strain ATCC 367 / BCRC 12310 / CIP 105137 / JCM 1170 / LMG 11437 / NCIMB 947 / NCTC 947) (Lactobacillus brevis).